The primary structure comprises 279 residues: Protein ABIL4 (279 aa).

Disordered regions lie at residues 192-211 (VHNN…PMRF) and 219-241 (LLKR…EPQR). Over residues 194–208 (NNINNRTPNKRSNSP) the composition is skewed to polar residues. The span at 219 to 228 (LLKRSSSPSQ) shows a compositional bias: low complexity.

This sequence belongs to the ABI family. In terms of assembly, binds SCAR.

The protein localises to the cytoplasm. It is found in the cytoskeleton. Functionally, involved in regulation of actin and microtubule organization. Part of a WAVE complex that activates the Arp2/3 complex. This chain is Protein ABIL4 (ABIL4), found in Arabidopsis thaliana (Mouse-ear cress).